The sequence spans 424 residues: MFGPQIRRVKLEKQSELRIELQPTSPLRLRLLDGKAEIFGYELPHEVWITFPPLMTFAVFTWYGATIEIDGITGNEYISCETPMVNYLGLHNSLQVQRHRVTSSTRDSASSQEGPRVIIVGDIDSGKSTLAKMLLNWAVKDGWKPTFVDLNVGQSSITIPGTIAAAPIKMLVDPVEGFPLDKALIHYFGLTNPSVNLRLYRTLVEELARELKEEFSANAESRASGMVIDTMGFIVREGYALLLHAIRTFNASLVIVVGQEEKLVYDLKKNLKFKKNLQVLNLEKSEGVFSRSSDFRKTLRNSNIQNYFYGVTNDLTVYTKTVKFSDVQVYRIGDFRVSGSTSAHQRGNDPLKITLVTIDEHLVNKVLAISYAIKPDQIISSIVAGFVCIKNVDISEERITYVSPSAAELPSKILILGTLTWHVT.

ATP contacts are provided by residues Glu16, Thr56, and 124–129 (DSGKST).

This sequence belongs to the Clp1 family. Clp1 subfamily. Forms a complex with cleavage and polyadenylation specificity factor (CPSF) subunits PCFS1, FIPS3 and CPSF30.

The protein resides in the nucleus. Functionally, required for endonucleolytic cleavage during polyadenylation-dependent pre-mRNA 3'-end formation. In Arabidopsis thaliana (Mouse-ear cress), this protein is Protein CLP1 homolog 5.